Consider the following 381-residue polypeptide: Creatine kinase M-type (381 aa).

The Phosphagen kinase N-terminal domain maps to 11-98 (KLNYSAAEEF…FDPVIEDRHG (88 aa)). The 243-residue stretch at 125–367 (YVLSSRVRTG…KLMVEMEKRL (243 aa)) folds into the Phosphagen kinase C-terminal domain. ATP is bound by residues 128 to 132 (SSRVR), histidine 191, arginine 236, arginine 292, 320 to 325 (RGTGGV), and aspartate 335.

This sequence belongs to the ATP:guanido phosphotransferase family. Dimer of identical or non-identical chains. With MM being the major form in skeletal muscle and myocardium, MB existing in myocardium, and BB existing in many tissues, especially brain.

The protein resides in the cytoplasm. It catalyses the reaction creatine + ATP = N-phosphocreatine + ADP + H(+). Functionally, reversibly catalyzes the transfer of phosphate between ATP and various phosphogens (e.g. creatine phosphate). Creatine kinase isoenzymes play a central role in energy transduction in tissues with large, fluctuating energy demands, such as skeletal muscle, heart, brain and spermatozoa. This chain is Creatine kinase M-type, found in Tetronarce californica (Pacific electric ray).